We begin with the raw amino-acid sequence, 348 residues long: Heat-inducible transcription repressor HrcA (348 aa).

The protein belongs to the HrcA family.

Negative regulator of class I heat shock genes (grpE-dnaK-dnaJ and groELS operons). Prevents heat-shock induction of these operons. The sequence is that of Heat-inducible transcription repressor HrcA from Pelotomaculum thermopropionicum (strain DSM 13744 / JCM 10971 / SI).